Here is a 434-residue protein sequence, read N- to C-terminus: Serine hydroxymethyltransferase (434 aa).

(6S)-5,6,7,8-tetrahydrofolate contacts are provided by residues leucine 128 and 132-134; that span reads GHL. N6-(pyridoxal phosphate)lysine is present on lysine 237.

It belongs to the SHMT family. As to quaternary structure, homodimer. Pyridoxal 5'-phosphate is required as a cofactor.

Its subcellular location is the cytoplasm. It catalyses the reaction (6R)-5,10-methylene-5,6,7,8-tetrahydrofolate + glycine + H2O = (6S)-5,6,7,8-tetrahydrofolate + L-serine. The protein operates within one-carbon metabolism; tetrahydrofolate interconversion. It participates in amino-acid biosynthesis; glycine biosynthesis; glycine from L-serine: step 1/1. Catalyzes the reversible interconversion of serine and glycine with tetrahydrofolate (THF) serving as the one-carbon carrier. This reaction serves as the major source of one-carbon groups required for the biosynthesis of purines, thymidylate, methionine, and other important biomolecules. Also exhibits THF-independent aldolase activity toward beta-hydroxyamino acids, producing glycine and aldehydes, via a retro-aldol mechanism. This chain is Serine hydroxymethyltransferase, found in Corynebacterium efficiens (strain DSM 44549 / YS-314 / AJ 12310 / JCM 11189 / NBRC 100395).